A 1039-amino-acid polypeptide reads, in one-letter code: Integrin alpha-4 (1039 aa).

The first 40 residues, 1-40 (MFSTKSAWLRNGGADQGPRGIALREAVMLLLYFGVPTGPS), serve as a signal peptide directing secretion. The Extracellular segment spans residues 41–983 (YNLDPENALL…LHHQRPKRHF (943 aa)). FG-GAP repeat units follow at residues 42–107 (NLDP…PNQT), 117–184 (SGEP…TELS), 193–244 (DYTR…QYKA), 246–298 (VDRQ…ENEL), 299–358 (NIVY…GAVM), 362–419 (ERVL…GISS), and 423–485 (QRIE…HPES). N-linked (GlcNAc...) asparagine glycosylation is found at Asn86, Asn105, and Asn145. An intrachain disulfide couples Cys98 to Cys108. 2 cysteine pairs are disulfide-bonded: Cys151/Cys172 and Cys190/Cys205. N-linked (GlcNAc...) asparagine glycosylation is present at Asn236. Residues Asp321, Asn323, Asp325, Asp329, Asp384, Asp386, Asp388, Asp392, Asp446, Asp448, Asn450, Tyr452, and Asp454 each contribute to the Ca(2+) site. The N-linked (GlcNAc...) asparagine glycan is linked to Asn487. 2 disulfides stabilise this stretch: Cys493–Cys502 and Cys508–Cys564. Asn525 and Asn545 each carry an N-linked (GlcNAc...) asparagine glycan. The SG1 signature appears at 613–623 (KKEKDVIRKMI). Residues Cys629 and Cys634 are joined by a disulfide bond. Asn633, Asn652, and Asn667 each carry an N-linked (GlcNAc...) asparagine glycan. The cysteines at positions 705 and 718 are disulfide-linked. N-linked (GlcNAc...) asparagine glycosylation is found at Asn813 and Asn828. Intrachain disulfides connect Cys859-Cys897 and Cys904-Cys909. Residues 984 to 1007 (TIIIITISLLLGLIVLLLISCVMW) traverse the membrane as a helical segment. Residues 1008–1039 (KAGFFKRQYKSILQEENRRDSWSYVNSKSNDD) are Cytoplasmic-facing. A GFFKR motif motif is present at residues 1010–1014 (GFFKR). Position 1028 is a phosphoserine (Ser1028).

Belongs to the integrin alpha chain family. As to quaternary structure, heterodimer of an alpha and a beta subunit. The alpha subunit can sometimes be cleaved into two non-covalently associated fragments. Alpha-4 associates with either beta-1 or beta-7. Alpha-4 interacts with PXN, LPXN, and TGFB1I1/HIC5. Interacts with CSPG4 through CSPG4 chondroitin sulfate glycosaminoglycan. Interacts with JAML; integrin alpha-4/beta-1 may regulate leukocyte to endothelial cells adhesion by controlling JAML homodimerization. ITGA4:ITGB1 is found in a ternary complex with CX3CR1 and CX3CL1. Interacts with MDK. ITGA4:ITGB1 interacts with MDK; this interaction mediates MDK-induced osteoblast cells migration through PXN phosphorylation. Integrin ITGA4:ITGB1 interacts with SVEP1 (via Sushi domain 21); thereby inhibits Ca(2+) intracellular signaling and as a result represses vasocontraction. ITGA4:ITGB1 interacts with SELP. ITGA4:ITGB1 interacts with BCAM. In terms of processing, phosphorylation on Ser-1028 inhibits PXN binding. As to expression, expressed in the media layer of the arterial wall (at protein level). Weakly expression in the thymus, spleen and mesenteric lymph nodes.

The protein localises to the membrane. Its function is as follows. Integrins alpha-4/beta-1 (VLA-4 or LPAM-2) and alpha-4/beta-7 (LPAM-1) are receptors for fibronectin. They recognize one or more domains within the alternatively spliced CS-1 and CS-5 regions of fibronectin. They are also receptors for VCAM1. Integrin alpha-4/beta-1 recognizes the sequence Q-I-D-S in VCAM1. Integrin alpha-4/beta-7 is also a receptor for MADCAM1. It recognizes the sequence L-D-T in MADCAM1. On activated endothelial cells integrin VLA-4 triggers homotypic aggregation for most VLA-4-positive leukocyte cell lines. It may also participate in cytolytic T-cell interactions with target cells. ITGA4:ITGB1 binds to fractalkine (CX3CL1) and may act as its coreceptor in CX3CR1-dependent fractalkine signaling. ITGA4:ITGB1 binds to PLA2G2A via a site (site 2) which is distinct from the classical ligand-binding site (site 1) and this induces integrin conformational changes and enhanced ligand binding to site 1. Integrin ITGA4:ITGB1 represses PRKCA-mediated L-type voltage-gated channel Ca(2+) influx and ROCK-mediated calcium sensitivity in vascular smooth muscle cells via its interaction with SVEP1, thereby inhibiting vasocontraction. This is Integrin alpha-4 (Itga4) from Mus musculus (Mouse).